The chain runs to 208 residues: Type 3 secretion system stator protein (208 aa).

The protein belongs to the SctL stator family. In terms of assembly, the core secretion machinery of the T3SS is composed of approximately 20 different proteins, including cytoplasmic components, a base, an export apparatus and a needle. This subunit is part of the cytosolic complex.

It localises to the cytoplasm. Functionally, component of the type III secretion system (T3SS), also called injectisome, which is used to inject bacterial effector proteins into eukaryotic host cells. Acts as a regulator of the HrcN/SctN ATPase activity. The chain is Type 3 secretion system stator protein from Sinorhizobium fredii (strain NBRC 101917 / NGR234).